Here is a 192-residue protein sequence, read N- to C-terminus: 4'-phosphopantetheinyl transferase AcpT (192 aa).

It belongs to the P-Pant transferase superfamily. Gsp/Sfp/HetI/AcpT family.

It carries out the reaction apo-[ACP] + CoA = holo-[ACP] + adenosine 3',5'-bisphosphate + H(+). In terms of biological role, may be involved in an alternative pathway for phosphopantetheinyl transfer and holo-ACP synthesis. The native apo-protein substrate is unknown. This is 4'-phosphopantetheinyl transferase AcpT (acpT) from Salmonella typhimurium (strain LT2 / SGSC1412 / ATCC 700720).